The following is a 271-amino-acid chain: Type III pantothenate kinase (271 aa).

6–13 (DVRNTNIV) lines the ATP pocket. Residue 109 to 112 (GADR) coordinates substrate. D111 (proton acceptor) is an active-site residue. D131 provides a ligand contact to K(+). T134 is a binding site for ATP. T186 contacts substrate.

The protein belongs to the type III pantothenate kinase family. As to quaternary structure, homodimer. NH4(+) serves as cofactor. It depends on K(+) as a cofactor.

Its subcellular location is the cytoplasm. It catalyses the reaction (R)-pantothenate + ATP = (R)-4'-phosphopantothenate + ADP + H(+). It functions in the pathway cofactor biosynthesis; coenzyme A biosynthesis; CoA from (R)-pantothenate: step 1/5. Its function is as follows. Catalyzes the phosphorylation of pantothenate (Pan), the first step in CoA biosynthesis. The polypeptide is Type III pantothenate kinase (Rhodococcus opacus (strain B4)).